The sequence spans 59 residues: Conotoxin Bu1.2 (59 aa).

Residues 1-16 form the signal peptide; sequence MFTVFLLVVLATTVVS. Residues 17–42 constitute a propeptide that is removed on maturation; it reads FSTDDESDGSNEEPSADQAARSAMNR. The tract at residues 18 to 43 is disordered; the sequence is STDDESDGSNEEPSADQAARSAMNRP. Residues 19-31 are compositionally biased toward acidic residues; the sequence is TDDESDGSNEEPS. 2 disulfides stabilise this stretch: Cys-46/Cys-52 and Cys-47/Cys-57. Glycine amide is present on Gly-58.

This sequence belongs to the conotoxin A superfamily. As to expression, expressed by the venom duct.

The protein localises to the secreted. The chain is Conotoxin Bu1.2 from Conus bullatus (Bubble cone).